The following is a 480-amino-acid chain: Cysteine--tRNA ligase (480 aa).

A Zn(2+)-binding site is contributed by cysteine 27. The 'HIGH' region signature appears at 29–39 (PTVYNYAHIGN). Zn(2+)-binding residues include cysteine 221, histidine 246, and glutamate 250. The 'KMSKS' region signature appears at 278-282 (KMSKS). Lysine 281 contacts ATP.

The protein belongs to the class-I aminoacyl-tRNA synthetase family. As to quaternary structure, monomer. Requires Zn(2+) as cofactor.

Its subcellular location is the cytoplasm. It catalyses the reaction tRNA(Cys) + L-cysteine + ATP = L-cysteinyl-tRNA(Cys) + AMP + diphosphate. The sequence is that of Cysteine--tRNA ligase from Borreliella afzelii (strain PKo) (Borrelia afzelii).